The following is a 300-amino-acid chain: UDP-N-acetylenolpyruvoylglucosamine reductase (300 aa).

Residues 28–193 (KTGGPADWLA…LDATFALKLG (166 aa)) enclose the FAD-binding PCMH-type domain. Arg172 is a catalytic residue. Ser222 functions as the Proton donor in the catalytic mechanism. Glu292 is a catalytic residue.

This sequence belongs to the MurB family. FAD is required as a cofactor.

The protein localises to the cytoplasm. The catalysed reaction is UDP-N-acetyl-alpha-D-muramate + NADP(+) = UDP-N-acetyl-3-O-(1-carboxyvinyl)-alpha-D-glucosamine + NADPH + H(+). It functions in the pathway cell wall biogenesis; peptidoglycan biosynthesis. In terms of biological role, cell wall formation. This Limosilactobacillus fermentum (strain NBRC 3956 / LMG 18251) (Lactobacillus fermentum) protein is UDP-N-acetylenolpyruvoylglucosamine reductase.